The chain runs to 285 residues: V-set and transmembrane domain-containing protein 2B (285 aa).

The N-terminal stretch at 1–28 (MEQRNRLGALGYLPPLLLHALLLFVADA) is a signal peptide. Residues 29–143 (AFTEVPKDVT…DDDTQEHKAQ (115 aa)) enclose the Ig-like V-type domain. The Extracellular segment spans residues 29–263 (AFTEVPKDVT…HGSGTGRSYT (235 aa)). Cys49 and Cys127 are joined by a disulfide. Residues 161–226 (EAVSHIQSSG…EAAAASAAHT (66 aa)) form a disordered region. Composition is skewed to low complexity over residues 177-189 (ASAA…GAAS) and 208-226 (PAAI…AAHT). Residues 264–284 (TDPLLSLLLLALHKFLRLLLG) traverse the membrane as a helical segment. His285 is a topological domain (cytoplasmic).

It is found in the membrane. The polypeptide is V-set and transmembrane domain-containing protein 2B (VSTM2B) (Homo sapiens (Human)).